A 217-amino-acid polypeptide reads, in one-letter code: Putative thymidylate synthase (217 aa).

Cys139 is an active-site residue.

It belongs to the thymidylate synthase family. Archaeal-type ThyA subfamily. In terms of assembly, monomer.

The protein localises to the cytoplasm. It functions in the pathway pyrimidine metabolism; dTTP biosynthesis. Its function is as follows. May catalyze the biosynthesis of dTMP using an unknown cosubstrate. The chain is Putative thymidylate synthase from Methanosarcina mazei (strain ATCC BAA-159 / DSM 3647 / Goe1 / Go1 / JCM 11833 / OCM 88) (Methanosarcina frisia).